The chain runs to 506 residues: Steroid (22S)-hydroxylase (506 aa).

Residues 12-32 (LLFFLPFILLALLTFYTTTVA) form a helical membrane-spanning segment. Position 449 (Cys449) interacts with heme.

This sequence belongs to the cytochrome P450 family. It depends on heme as a cofactor. Highly expressed in roots and leaf blades. Expressed in shoot apex, stems, leaf sheaths, inflorescences and flowers.

Its subcellular location is the membrane. The enzyme catalyses a C28-steroid + reduced [NADPH--hemoprotein reductase] + O2 = a (22S)-22-hydroxy C28-steroid + oxidized [NADPH--hemoprotein reductase] + H2O + H(+). The catalysed reaction is campesterol + reduced [NADPH--hemoprotein reductase] + O2 = (22S)-22-hydroxycampesterol + oxidized [NADPH--hemoprotein reductase] + H2O + H(+). It carries out the reaction campestanol + reduced [NADPH--hemoprotein reductase] + O2 = 6-deoxycathasterone + oxidized [NADPH--hemoprotein reductase] + H2O + H(+). The protein operates within plant hormone biosynthesis; brassinosteroid biosynthesis. In terms of biological role, catalyzes the C22-alpha-hydroxylation step in brassinosteroid biosynthesis, which is the rate-limiting step in this biosynthetic pathway. Catalyzes the conversion of campesterol (CR) to (22S)-22-hydroxycampesterol (22-OHCR, 22-hydroxyCR) and of campestanol (CN) to 6-deoxycathasterone (6-deoxoCT). Required for auxin responses involved in the regulation of epidermal cells length of the lamina joint. The protein is Steroid (22S)-hydroxylase of Oryza sativa subsp. japonica (Rice).